Reading from the N-terminus, the 183-residue chain is Dual-action ribosomal maturation protein DarP (183 aa).

Belongs to the DarP family.

It localises to the cytoplasm. Member of a network of 50S ribosomal subunit biogenesis factors which assembles along the 30S-50S interface, preventing incorrect 23S rRNA structures from forming. Promotes peptidyl transferase center (PTC) maturation. The sequence is that of Dual-action ribosomal maturation protein DarP from Shigella flexneri.